Here is a 202-residue protein sequence, read N- to C-terminus: ATP-dependent Clp protease proteolytic subunit 3 (202 aa).

Residue Ser93 is the Nucleophile of the active site. His118 is a catalytic residue.

This sequence belongs to the peptidase S14 family. In terms of assembly, fourteen ClpP subunits assemble into 2 heptameric rings which stack back to back to give a disk-like structure with a central cavity, resembling the structure of eukaryotic proteasomes.

Its subcellular location is the cytoplasm. It catalyses the reaction Hydrolysis of proteins to small peptides in the presence of ATP and magnesium. alpha-casein is the usual test substrate. In the absence of ATP, only oligopeptides shorter than five residues are hydrolyzed (such as succinyl-Leu-Tyr-|-NHMec, and Leu-Tyr-Leu-|-Tyr-Trp, in which cleavage of the -Tyr-|-Leu- and -Tyr-|-Trp bonds also occurs).. Functionally, cleaves peptides in various proteins in a process that requires ATP hydrolysis. Has a chymotrypsin-like activity. Plays a major role in the degradation of misfolded proteins. The sequence is that of ATP-dependent Clp protease proteolytic subunit 3 from Rhodococcus jostii (strain RHA1).